Consider the following 218-residue polypeptide: Ribonuclease HII (218 aa).

The RNase H type-2 domain maps to 24–218; the sequence is ESIAGVDEVG…KLFAVNGSLT (195 aa). D30, E31, and D126 together coordinate a divalent metal cation.

The protein belongs to the RNase HII family. Mn(2+) is required as a cofactor. Requires Mg(2+) as cofactor.

The protein localises to the cytoplasm. The catalysed reaction is Endonucleolytic cleavage to 5'-phosphomonoester.. Endonuclease that specifically degrades the RNA of RNA-DNA hybrids. In Prochlorococcus marinus (strain MIT 9313), this protein is Ribonuclease HII.